Consider the following 615-residue polypeptide: MAQKKYLQAKLTQFLREDRIQLWKPPYTDENKKVGLALKDLAKQYSDRLECCENEVEKVIEEIRCKAIERGTGNDNYRTTGIATIEVFLPPRLKKDRKNLLETRLHITGRELRSKIAETFGLQENYIKIVINKKQLQLGKTLEEQGVAHNVKAMVLELKQSEEDARKNFQLEEEEQNEAKLKEKQIQRTKRGLEILAKRAAETVVDPEMTPYLDIANQTGRSIRIPPSERKALMLAMGYHEKGRAFLKRKEYGIALPCLLDADKYFCECCRELLDTVDNYAVLQLDIVWCYFRLEQLECLDDAEKKLNLAQKCFKNCYGENHQRLVHIKGNCGKEKVLFLRLYLLQGIRNYHSGNDVEAYEYLNKARQLFKELYIDPSKVDNLLQLGFTAQEARLGLRACDGNVDHAATHITNRREELAQIRKEEKEKKRRRLENIRFLKGMGYSTHAAQQVLHAASGNLDEALKILLSNPQMWWLNDSNPETDNRQESPSQENIDRLVYMGFDALVAEAALRVFRGNVQLAAQTLAHNGGSLPPELPLSPEDSLSPPATSPSDSAGTSSASTDEDMETEAVNEILEDIPEHEEDYLDSTLEDEEIIIAEYLSYVENRKSATKKN.

Coiled coils occupy residues 36 to 70 (LALK…AIER) and 152 to 203 (KAMV…AAET). UBA domains lie at 374-413 (YIDP…HITN), 424-470 (EEKE…LLSN), and 489-529 (SPSQ…LAHN). Residues 414–431 (RREELAQIRKEEKEKKRR) carry the Nuclear localization signal motif. Positions 427 to 474 (EKKRRRLENIRFLKGMGYSTHAAQQVLHAASGNLDEALKILLSNPQMW) are NEDD8-binding 1. Positions 532–586 (SLPPELPLSPEDSLSPPATSPSDSAGTSSASTDEDMETEAVNEILEDIPEHEEDY) are disordered. The span at 539–562 (LSPEDSLSPPATSPSDSAGTSSAS) shows a compositional bias: low complexity. Residues 550–598 (TSPSDSAGTSSASTDEDMETEAVNEILEDIPEHEEDYLDSTLEDEEIII) are NEDD8-binding 2. A compositionally biased stretch (acidic residues) spans 563 to 586 (TDEDMETEAVNEILEDIPEHEEDY).

As to quaternary structure, directly interacts with NEDD8 and PSMD4/S5a, a member of the regulatory subunit of the 26S proteasome. Isoform 1 binds to NEDD8 more efficiently than isoform 2. Interacts with AIPL1. The interaction with UBD via UBA domains facilitates the linking of UBD-conjugated target protein to the proteasome complex and accelerates UBD degradation and that of its conjugates. In terms of tissue distribution, widely expressed with lowest expression in the pancreas for isoform 1 and in leukocytes, liver, prostate and skeletal muscle for isoform 2.

Its subcellular location is the nucleus. Specific down-regulator of the NEDD8 conjugation system. Recruits NEDD8, UBD, and their conjugates to the proteasome for degradation. Isoform 1 promotes the degradation of NEDD8 more efficiently than isoform 2. The polypeptide is NEDD8 ultimate buster 1 (NUB1) (Homo sapiens (Human)).